A 331-amino-acid polypeptide reads, in one-letter code: ESX-3 secretion system protein EccE3 (331 aa).

Transmembrane regions (helical) follow at residues 11–31 and 37–57; these read GRVT…PWQS and LLGV…GLYF.

The protein belongs to the EccE family. As to quaternary structure, part of the ESX-3 / type VII secretion system (T7SS), which is composed of cytosolic and membrane components. The ESX-3 membrane complex is composed of EccB3, EccC3, EccD3 and EccE3.

The protein resides in the cell inner membrane. In terms of biological role, part of the ESX-3 specialized secretion system, which is important for iron and zinc uptake or homeostasis. The protein is ESX-3 secretion system protein EccE3 of Mycobacterium tuberculosis (strain CDC 1551 / Oshkosh).